The sequence spans 240 residues: Probable xyloglucan-specific endo-beta-1,4-glucanase A (240 aa).

A signal peptide spans 1-15 (MKFLTPLVLSSLASA).

It belongs to the glycosyl hydrolase 12 (cellulase H) family.

It localises to the secreted. It carries out the reaction xyloglucan + H2O = xyloglucan oligosaccharides.. Catalyzes endohydrolysis of 1,4-beta-D-glucosidic linkages in xyloglucan with retention of the beta-configuration of the glycosyl residues. Specific for xyloglucan and does not hydrolyze other cell wall components. The polypeptide is Probable xyloglucan-specific endo-beta-1,4-glucanase A (xgeA) (Aspergillus oryzae (strain ATCC 42149 / RIB 40) (Yellow koji mold)).